The following is a 166-amino-acid chain: Interferon gamma (166 aa).

A signal peptide spans 1-23 (MKYTSYILAFQLCIVLGSLGCYC). At Q24 the chain carries Pyrrolidone carboxylic acid. N48, N86, and N120 each carry an N-linked (GlcNAc...) asparagine glycan.

It belongs to the type II (or gamma) interferon family. Homodimer. Interacts with IFNGR1 (via extracellular domain); this interaction promotes IFNGR1 dimerization. In terms of tissue distribution, released primarily from activated T lymphocytes.

The protein resides in the secreted. In terms of biological role, type II interferon produced by immune cells such as T-cells and NK cells that plays crucial roles in antimicrobial, antiviral, and antitumor responses by activating effector immune cells and enhancing antigen presentation. Primarily signals through the JAK-STAT pathway after interaction with its receptor IFNGR1 to affect gene regulation. Upon IFNG binding, IFNGR1 intracellular domain opens out to allow association of downstream signaling components JAK2, JAK1 and STAT1, leading to STAT1 activation, nuclear translocation and transcription of IFNG-regulated genes. Many of the induced genes are transcription factors such as IRF1 that are able to further drive regulation of a next wave of transcription. Plays a role in class I antigen presentation pathway by inducing a replacement of catalytic proteasome subunits with immunoproteasome subunits. In turn, increases the quantity, quality, and repertoire of peptides for class I MHC loading. Increases the efficiency of peptide generation also by inducing the expression of activator PA28 that associates with the proteasome and alters its proteolytic cleavage preference. Up-regulates as well MHC II complexes on the cell surface by promoting expression of several key molecules such as cathepsins B/CTSB, H/CTSH, and L/CTSL. Participates in the regulation of hematopoietic stem cells during development and under homeostatic conditions by affecting their development, quiescence, and differentiation. The protein is Interferon gamma (IFNG) of Saimiri sciureus (Common squirrel monkey).